The primary structure comprises 410 residues: MQIYKVGGAVRDRLLGRPVSEVDWVVVGASAEQMLELGYRPVGADFPVFLHPQTGEEYALARTERKSGRGYGGFTFHASPEVTLEEDLIRRDLSVNAMAEDEQGKLIDPYGGQQDLAARILRHVSPAFAEDPLRVLRVARFAARYAPLGFHVADETLGLMRQLAESGELAHLTAERSWKEISRALMEPRPDVFIQVLRDCGALAALLPEVDDLFGVPQPEAHHPEIDTGVHVLSVLRQCAEHDQPLSVRWACLLHDVGKGLTPEAEWPRHIAHEHKGLRLIQAINERCKAPRDCAELAMLVGEFHTHGHRALELRPSTLLELLQRFDVFRRPQRFAEFVAACEMDARGRHGLEQRQYPQAAYLLGAAEAARQVPVKPLLEKGLKGAELGEALNRERLRALKAYKAQHAPS.

2 residues coordinate ATP: Gly-8 and Arg-11. Positions 8 and 11 each coordinate CTP. The Mg(2+) site is built by Glu-21 and Asp-23. Residues Arg-91, Arg-137, and Arg-140 each contribute to the ATP site. Residues Arg-91, Arg-137, and Arg-140 each contribute to the CTP site. In terms of domain architecture, HD spans 228–329 (TGVHVLSVLR…LELLQRFDVF (102 aa)).

The protein belongs to the tRNA nucleotidyltransferase/poly(A) polymerase family. Bacterial CCA-adding enzyme type 1 subfamily. Monomer. Can also form homodimers and oligomers. The cofactor is Mg(2+). Ni(2+) is required as a cofactor.

It catalyses the reaction a tRNA precursor + 2 CTP + ATP = a tRNA with a 3' CCA end + 3 diphosphate. It carries out the reaction a tRNA with a 3' CCA end + 2 CTP + ATP = a tRNA with a 3' CCACCA end + 3 diphosphate. In terms of biological role, catalyzes the addition and repair of the essential 3'-terminal CCA sequence in tRNAs without using a nucleic acid template. Adds these three nucleotides in the order of C, C, and A to the tRNA nucleotide-73, using CTP and ATP as substrates and producing inorganic pyrophosphate. tRNA 3'-terminal CCA addition is required both for tRNA processing and repair. Also involved in tRNA surveillance by mediating tandem CCA addition to generate a CCACCA at the 3' terminus of unstable tRNAs. While stable tRNAs receive only 3'-terminal CCA, unstable tRNAs are marked with CCACCA and rapidly degraded. This Ectopseudomonas mendocina (strain ymp) (Pseudomonas mendocina) protein is Multifunctional CCA protein.